A 185-amino-acid polypeptide reads, in one-letter code: Adenine phosphoribosyltransferase (185 aa).

It belongs to the purine/pyrimidine phosphoribosyltransferase family. As to quaternary structure, homodimer.

Its subcellular location is the cytoplasm. The enzyme catalyses AMP + diphosphate = 5-phospho-alpha-D-ribose 1-diphosphate + adenine. Its pathway is purine metabolism; AMP biosynthesis via salvage pathway; AMP from adenine: step 1/1. Functionally, catalyzes a salvage reaction resulting in the formation of AMP, that is energically less costly than de novo synthesis. This chain is Adenine phosphoribosyltransferase, found in Pectobacterium atrosepticum (strain SCRI 1043 / ATCC BAA-672) (Erwinia carotovora subsp. atroseptica).